Reading from the N-terminus, the 196-residue chain is Pyridoxal 5'-phosphate synthase subunit PdxT (196 aa).

46–48 (GES) provides a ligand contact to L-glutamine. The active-site Nucleophile is Cys-78. L-glutamine contacts are provided by residues Arg-110 and 138–139 (IR). Residues His-174 and Glu-176 each act as charge relay system in the active site.

This sequence belongs to the glutaminase PdxT/SNO family. In terms of assembly, in the presence of PdxS, forms a dodecamer of heterodimers. Only shows activity in the heterodimer.

The enzyme catalyses aldehydo-D-ribose 5-phosphate + D-glyceraldehyde 3-phosphate + L-glutamine = pyridoxal 5'-phosphate + L-glutamate + phosphate + 3 H2O + H(+). It carries out the reaction L-glutamine + H2O = L-glutamate + NH4(+). The protein operates within cofactor biosynthesis; pyridoxal 5'-phosphate biosynthesis. Catalyzes the hydrolysis of glutamine to glutamate and ammonia as part of the biosynthesis of pyridoxal 5'-phosphate. The resulting ammonia molecule is channeled to the active site of PdxS. In Deinococcus radiodurans (strain ATCC 13939 / DSM 20539 / JCM 16871 / CCUG 27074 / LMG 4051 / NBRC 15346 / NCIMB 9279 / VKM B-1422 / R1), this protein is Pyridoxal 5'-phosphate synthase subunit PdxT.